Reading from the N-terminus, the 419-residue chain is MPIFKKTLIVLSFIFLISILIYLNMYLFGTSTVGIYGVILITYLVIKLGLSFLYEPFKGKPHDYKVAAVIPSYNEDAESLLETLKSVLAQTYPLSEIYIVDDGSSNTDAIQLIEEYVNREVDICRNVIVHRSLVNKGKRHAQAWAFERSDADVFLTVDSDTYIYPNALEELLKSFNDETVYAATGHLNARNRQTNLLTRLTDIRYDNAFGVERAAQSLTGNILVCSGPLSIYRREVIIPNLERYKNQTFLGLPVSIGDDRCLTNYAIDLGRTVYQSTARCDTDVPFQLKSYLKQQNRWNKSFFKESIISVKKILSNPIVALWTIFEVVMFMMLIVAIGNLLFNQAIQLDLIKLFAFLSIIFIVALCRNVHYMIKHPASFLLSPLYGILHLFVLQPLKLYSLCTIKNTEWGTRKKVTIFK.

A run of 5 helical transmembrane segments spans residues 8–28 (LIVLSFIFLISILIYLNMYLF), 33–53 (VGIYGVILITYLVIKLGLSFL), 318–338 (IVALWTIFEVVMFMMLIVAIG), 345–365 (AIQLDLIKLFAFLSIIFIVAL), and 376–396 (PASFLLSPLYGILHLFVLQPL).

It belongs to the NodC/HAS family. It depends on Mg(2+) as a cofactor.

It localises to the cell membrane. It carries out the reaction [hyaluronan](n) + UDP-N-acetyl-alpha-D-glucosamine = N-acetyl-beta-D-glucosaminyl-(1-&gt;4)-[hyaluronan](n) + UDP + H(+). It catalyses the reaction N-acetyl-beta-D-glucosaminyl-(1-&gt;4)-[hyaluronan](n) + UDP-alpha-D-glucuronate = [hyaluronan](n+1) + UDP + H(+). Its pathway is glycan biosynthesis; hyaluronan biosynthesis. In terms of biological role, glycosaminoglycan synthesis. The hyaluronic acid capsule is involved in the pathogenicity of group A Streptococci; it may be the major virulence determinant. The protein is Hyaluronan synthase (hasA) of Streptococcus pyogenes serotype M1.